A 248-amino-acid polypeptide reads, in one-letter code: Carboxy-S-adenosyl-L-methionine synthase (248 aa).

S-adenosyl-L-methionine contacts are provided by residues Tyr-40, 65 to 67, 95 to 96, 123 to 124, Asn-138, and Arg-205; these read GCS, DN, and DI.

The protein belongs to the class I-like SAM-binding methyltransferase superfamily. Cx-SAM synthase family. Homodimer.

The catalysed reaction is prephenate + S-adenosyl-L-methionine = carboxy-S-adenosyl-L-methionine + 3-phenylpyruvate + H2O. Catalyzes the conversion of S-adenosyl-L-methionine (SAM) to carboxy-S-adenosyl-L-methionine (Cx-SAM). The sequence is that of Carboxy-S-adenosyl-L-methionine synthase from Hahella chejuensis (strain KCTC 2396).